A 147-amino-acid polypeptide reads, in one-letter code: Protein MioC (147 aa).

Positions 4-143 (ITLISGSTLG…PAEEWLGSWV (140 aa)) constitute a Flavodoxin-like domain.

The protein belongs to the flavodoxin family. MioC subfamily. Homodimer. FMN serves as cofactor.

Its function is as follows. Probable electron transporter required for biotin synthase activity. The sequence is that of Protein MioC (mioC) from Escherichia coli (strain K12).